The primary structure comprises 536 residues: GATA zinc finger domain-containing protein 9 (536 aa).

2 stretches are compositionally biased toward polar residues: residues Met-1–Ser-20 and Cys-36–Ala-55. Disordered stretches follow at residues Met-1–Ser-77, Ser-183–Ser-211, Arg-237–Ser-258, Gln-273–Gln-342, and Ala-370–Ser-423. Residues Thr-56–Asn-72 are compositionally biased toward low complexity. Over residues Ser-188–Gly-206 the composition is skewed to acidic residues. Positions Arg-237 to Tyr-247 are enriched in basic residues. A compositionally biased stretch (polar residues) spans Gln-273–Asn-283. Composition is skewed to low complexity over residues Ser-318–Asn-335 and Pro-379–Asn-399. A GATA-type zinc finger spans residues Cys-479 to Cys-504.

This Dictyostelium discoideum (Social amoeba) protein is GATA zinc finger domain-containing protein 9 (gtaI).